The following is a 248-amino-acid chain: Transmembrane protein 182 (248 aa).

Residues 1–26 form the signal peptide; it reads MKIHVAGFFAGLFGALATLFILLSFG. The Extracellular portion of the chain corresponds to 27–136; the sequence is TDYWLLASET…IIYRGFWSVS (110 aa). N66 and N119 each carry an N-linked (GlcNAc...) asparagine glycan. The chain crosses the membrane as a helical span at residues 137–157; it reads MLVGVAAVVAGGFIIICAAPF. Residues 158–167 are Cytoplasmic-facing; that stretch reads ASHRLYKAGG. A helical transmembrane segment spans residues 168 to 188; sequence GLYLISGFFVLVVTAMYVIWI. Residues 189-218 lie on the Extracellular side of the membrane; the sequence is DVLDVISLYTEYQKLNKCADFELNKTYGLS. Residue N212 is glycosylated (N-linked (GlcNAc...) asparagine). The chain crosses the membrane as a helical span at residues 219–239; that stretch reads FMFAPVGVFFCFLSGLLFLVI. The Cytoplasmic portion of the chain corresponds to 240-248; the sequence is GRTVHHQYN.

The protein belongs to the TMEM182 family.

Its subcellular location is the cell membrane. May negatively regulate myogenesis and skeletal muscle regeneration. The polypeptide is Transmembrane protein 182 (tmem182a) (Danio rerio (Zebrafish)).